A 136-amino-acid chain; its full sequence is ATP synthase epsilon chain (136 aa).

The interval M106–D136 is disordered.

This sequence belongs to the ATPase epsilon chain family. As to quaternary structure, F-type ATPases have 2 components, CF(1) - the catalytic core - and CF(0) - the membrane proton channel. CF(1) has five subunits: alpha(3), beta(3), gamma(1), delta(1), epsilon(1). CF(0) has three main subunits: a, b and c.

It is found in the cellular thylakoid membrane. In terms of biological role, produces ATP from ADP in the presence of a proton gradient across the membrane. This is ATP synthase epsilon chain from Synechococcus sp. (strain CC9605).